The sequence spans 190 residues: UPF0301 protein Rmet_2743 (190 aa).

Belongs to the UPF0301 (AlgH) family.

The chain is UPF0301 protein Rmet_2743 from Cupriavidus metallidurans (strain ATCC 43123 / DSM 2839 / NBRC 102507 / CH34) (Ralstonia metallidurans).